Consider the following 90-residue polypeptide: Elongation factor 1-beta (90 aa).

This sequence belongs to the EF-1-beta/EF-1-delta family.

Promotes the exchange of GDP for GTP in EF-1-alpha/GDP, thus allowing the regeneration of EF-1-alpha/GTP that could then be used to form the ternary complex EF-1-alpha/GTP/AAtRNA. The protein is Elongation factor 1-beta of Sulfolobus acidocaldarius (strain ATCC 33909 / DSM 639 / JCM 8929 / NBRC 15157 / NCIMB 11770).